The chain runs to 288 residues: 2-methoxy-6-polyprenyl-1,4-benzoquinol methylase, mitochondrial (288 aa).

Thr68, Asp102, and Ser146 together coordinate S-adenosyl-L-methionine. Residues 260–270 (PITPTTSSDIP) show a composition bias toward low complexity. The disordered stretch occupies residues 260–288 (PITPTTSSDIPAQNTSEATCEVKPEPNSA). Basic and acidic residues predominate over residues 279-288 (CEVKPEPNSA).

It belongs to the class I-like SAM-binding methyltransferase superfamily. MenG/UbiE family. As to quaternary structure, component of a multi-subunit COQ enzyme complex.

It localises to the mitochondrion inner membrane. It catalyses the reaction a 2-methoxy-6-(all-trans-polyprenyl)benzene-1,4-diol + S-adenosyl-L-methionine = a 5-methoxy-2-methyl-3-(all-trans-polyprenyl)benzene-1,4-diol + S-adenosyl-L-homocysteine + H(+). It participates in cofactor biosynthesis; ubiquinone biosynthesis. Functionally, methyltransferase required for the conversion of 2-polyprenyl-6-methoxy-1,4-benzoquinol (DDMQH2) to 2-polyprenyl-3-methyl-6-methoxy-1,4-benzoquinol (DMQH2). The sequence is that of 2-methoxy-6-polyprenyl-1,4-benzoquinol methylase, mitochondrial from Leishmania donovani.